A 132-amino-acid chain; its full sequence is Small ribosomal subunit protein uS8 (132 aa).

The protein belongs to the universal ribosomal protein uS8 family. Part of the 30S ribosomal subunit. Contacts proteins S5 and S12.

One of the primary rRNA binding proteins, it binds directly to 16S rRNA central domain where it helps coordinate assembly of the platform of the 30S subunit. This is Small ribosomal subunit protein uS8 from Xylella fastidiosa (strain 9a5c).